The primary structure comprises 506 residues: Cobyric acid synthase (506 aa).

The GATase cobBQ-type domain occupies 254-453; sequence DLDIAVIRLP…IHGIFESDSF (200 aa). The active-site Nucleophile is C334. H445 is an active-site residue.

The protein belongs to the CobB/CobQ family. CobQ subfamily.

The protein operates within cofactor biosynthesis; adenosylcobalamin biosynthesis. In terms of biological role, catalyzes amidations at positions B, D, E, and G on adenosylcobyrinic A,C-diamide. NH(2) groups are provided by glutamine, and one molecule of ATP is hydrogenolyzed for each amidation. The sequence is that of Cobyric acid synthase from Dehalococcoides mccartyi (strain ATCC BAA-2266 / KCTC 15142 / 195) (Dehalococcoides ethenogenes (strain 195)).